Consider the following 211-residue polypeptide: ATP phosphoribosyltransferase (211 aa).

This sequence belongs to the ATP phosphoribosyltransferase family. Short subfamily. In terms of assembly, heteromultimer composed of HisG and HisZ subunits.

The protein resides in the cytoplasm. The catalysed reaction is 1-(5-phospho-beta-D-ribosyl)-ATP + diphosphate = 5-phospho-alpha-D-ribose 1-diphosphate + ATP. It participates in amino-acid biosynthesis; L-histidine biosynthesis; L-histidine from 5-phospho-alpha-D-ribose 1-diphosphate: step 1/9. Catalyzes the condensation of ATP and 5-phosphoribose 1-diphosphate to form N'-(5'-phosphoribosyl)-ATP (PR-ATP). Has a crucial role in the pathway because the rate of histidine biosynthesis seems to be controlled primarily by regulation of HisG enzymatic activity. This Hahella chejuensis (strain KCTC 2396) protein is ATP phosphoribosyltransferase.